Consider the following 288-residue polypeptide: ATP synthase gamma chain (288 aa).

Belongs to the ATPase gamma chain family. In terms of assembly, F-type ATPases have 2 components, CF(1) - the catalytic core - and CF(0) - the membrane proton channel. CF(1) has five subunits: alpha(3), beta(3), gamma(1), delta(1), epsilon(1). CF(0) has three main subunits: a, b and c.

Its subcellular location is the cell membrane. In terms of biological role, produces ATP from ADP in the presence of a proton gradient across the membrane. The gamma chain is believed to be important in regulating ATPase activity and the flow of protons through the CF(0) complex. The protein is ATP synthase gamma chain of Staphylococcus aureus (strain bovine RF122 / ET3-1).